A 295-amino-acid polypeptide reads, in one-letter code: Small ribosomal subunit protein uS2 (295 aa).

Residue Ser-2 is modified to N-acetylserine. A Phosphoserine modification is found at Ser-43. The residue at position 52 (Lys-52) is an N6-acetyllysine. An interaction with PPP1R16B region spans residues 54–113 (TWEKLLLAARAIVAIENPADVSVISSRNTGQRAVLKFAAATGATPIAGRFTPGTFTNQIQ). Lys-89 carries the N6-acetyllysine; alternate modification. Lys-89 participates in a covalent cross-link: Glycyl lysine isopeptide (Lys-Gly) (interchain with G-Cter in SUMO2); alternate. The residue at position 97 (Thr-97) is a Phosphothreonine. Laminin-binding regions lie at residues 161-180 (IPCNNKGAHSVGLMWWMLAR) and 205-229 (RDPEEIEKEEQAAAEKAVTKEEFQG). 5 [DE]-W-[ST] repeats span residues 230-232 (EWT), 247-249 (DWS), 266-268 (DWS), 275-277 (DWS), and 293-295 (EWS). A laminin-binding region spans residues 242–295 (QPEVADWSEGVQVPSVPIQQFPTEDWSAQPSTEDWSAAPTAQATEWVGTTTEWS). Positions 266-295 (DWSAQPSTEDWSAAPTAQATEWVGTTTEWS) are disordered.

Belongs to the universal ribosomal protein uS2 family. Monomer (37LRP) and homodimer (67LR). Component of the small ribosomal subunit. Mature ribosomes consist of a small (40S) and a large (60S) subunit. The 40S subunit contains about 33 different proteins and 1 molecule of RNA (18S). The 60S subunit contains about 49 different proteins and 3 molecules of RNA (28S, 5.8S and 5S). Interacts with RPS21. Interacts with several laminins including at least LAMB1. Interacts with MDK. The mature dimeric form interacts with PPP1R16B (via its fourth ankyrin repeat). Interacts with PPP1CA only in the presence of PPP1R16B. In terms of processing, acylated. Acylation may be a prerequisite for conversion of the monomeric 37 kDa laminin receptor precursor (37LRP) to the mature dimeric 67 kDa laminin receptor (67LR), and may provide a mechanism for membrane association. Post-translationally, cleaved by stromelysin-3 (ST3) at the cell surface. Cleavage by stromelysin-3 may be a mechanism to alter cell-extracellular matrix interactions.

Its subcellular location is the cell membrane. The protein localises to the cytoplasm. It is found in the nucleus. Functionally, required for the assembly and/or stability of the 40S ribosomal subunit. Required for the processing of the 20S rRNA-precursor to mature 18S rRNA in a late step of the maturation of 40S ribosomal subunits. Also functions as a cell surface receptor for laminin. Plays a role in cell adhesion to the basement membrane and in the consequent activation of signaling transduction pathways. May play a role in cell fate determination and tissue morphogenesis. Also acts as a receptor for several other ligands, including the pathogenic prion protein, viruses, and bacteria. Acts as a PPP1R16B-dependent substrate of PPP1CA. This Bos taurus (Bovine) protein is Small ribosomal subunit protein uS2.